We begin with the raw amino-acid sequence, 245 residues long: tRNA (guanine-N(1)-)-methyltransferase (245 aa).

Residues Gly-111 and 131–136 (MGDYVL) contribute to the S-adenosyl-L-methionine site.

Belongs to the RNA methyltransferase TrmD family. In terms of assembly, homodimer.

It localises to the cytoplasm. It catalyses the reaction guanosine(37) in tRNA + S-adenosyl-L-methionine = N(1)-methylguanosine(37) in tRNA + S-adenosyl-L-homocysteine + H(+). Specifically methylates guanosine-37 in various tRNAs. This Staphylococcus epidermidis (strain ATCC 12228 / FDA PCI 1200) protein is tRNA (guanine-N(1)-)-methyltransferase.